A 322-amino-acid chain; its full sequence is Lipoyl synthase (322 aa).

Residues Cys66, Cys71, Cys77, Cys92, Cys96, Cys99, and Ser306 each coordinate [4Fe-4S] cluster. Residues 78-295 (FSKGTATFMI…EKEAYELGFS (218 aa)) enclose the Radical SAM core domain.

Belongs to the radical SAM superfamily. Lipoyl synthase family. The cofactor is [4Fe-4S] cluster.

The protein resides in the cytoplasm. It catalyses the reaction [[Fe-S] cluster scaffold protein carrying a second [4Fe-4S](2+) cluster] + N(6)-octanoyl-L-lysyl-[protein] + 2 oxidized [2Fe-2S]-[ferredoxin] + 2 S-adenosyl-L-methionine + 4 H(+) = [[Fe-S] cluster scaffold protein] + N(6)-[(R)-dihydrolipoyl]-L-lysyl-[protein] + 4 Fe(3+) + 2 hydrogen sulfide + 2 5'-deoxyadenosine + 2 L-methionine + 2 reduced [2Fe-2S]-[ferredoxin]. It participates in protein modification; protein lipoylation via endogenous pathway; protein N(6)-(lipoyl)lysine from octanoyl-[acyl-carrier-protein]: step 2/2. In terms of biological role, catalyzes the radical-mediated insertion of two sulfur atoms into the C-6 and C-8 positions of the octanoyl moiety bound to the lipoyl domains of lipoate-dependent enzymes, thereby converting the octanoylated domains into lipoylated derivatives. The polypeptide is Lipoyl synthase (Neisseria meningitidis serogroup C (strain 053442)).